A 439-amino-acid chain; its full sequence is Dihydroorotase (439 aa).

Positions 73 and 75 each coordinate Zn(2+). Substrate is bound by residues histidine 75 to arginine 77 and asparagine 107. Zn(2+) is bound by residues aspartate 165, histidine 192, and histidine 245. Asparagine 291 contributes to the substrate binding site. Aspartate 318 contributes to the Zn(2+) binding site. Residue aspartate 318 is part of the active site. Position 322 (histidine 322) interacts with substrate.

The protein belongs to the metallo-dependent hydrolases superfamily. DHOase family. Class I DHOase subfamily. It depends on Zn(2+) as a cofactor.

It catalyses the reaction (S)-dihydroorotate + H2O = N-carbamoyl-L-aspartate + H(+). It participates in pyrimidine metabolism; UMP biosynthesis via de novo pathway; (S)-dihydroorotate from bicarbonate: step 3/3. In terms of biological role, catalyzes the reversible cyclization of carbamoyl aspartate to dihydroorotate. This Syntrophobacter fumaroxidans (strain DSM 10017 / MPOB) protein is Dihydroorotase.